A 362-amino-acid polypeptide reads, in one-letter code: Peptide chain release factor 1 (362 aa).

Gln-237 carries the N5-methylglutamine modification.

Belongs to the prokaryotic/mitochondrial release factor family. Methylated by PrmC. Methylation increases the termination efficiency of RF1.

It localises to the cytoplasm. Functionally, peptide chain release factor 1 directs the termination of translation in response to the peptide chain termination codons UAG and UAA. This chain is Peptide chain release factor 1, found in Vibrio parahaemolyticus serotype O3:K6 (strain RIMD 2210633).